A 612-amino-acid chain; its full sequence is Actin-binding LIM protein 2 (612 aa).

4 LIM zinc-binding domains span residues 22-81, 81-141, 151-210, and 210-270; these read ILCN…LYGT, TRCF…TLLG, RSCG…KFGI, and IRCD…ARTE. Zn(2+) is bound by residues C83, C86, H103, C106, C109, C112, C131, and C134. The Zn(2+) site is built by C212, C215, H232, C235, C238, C241, H260, and C263. The segment covering 269 to 278 has biased composition (basic and acidic residues); that stretch reads TEDKSKETRT. Disordered regions lie at residues 269-295 and 341-433; these read TEDK…SGSP and AVGD…DNIY. Residues 279–295 show a composition bias toward low complexity; the sequence is SSESIVSVPASSTSGSP. S282, S294, G351, R356, S365, and S368 each carry phosphoserine. The span at 364–373 shows a compositional bias: low complexity; it reads SSPSSAGSVS. Residues 394-416 are compositionally biased toward polar residues; it reads SGRSTPSLSVHSDSRPPSSTYQQ. S453 carries the post-translational modification Phosphoserine. The disordered stretch occupies residues 471–498; sequence ADTRTNSPDLDSQSLSLSSGTDQEPLQR. T473 carries the phosphothreonine modification. Residues S477 and S579 each carry the phosphoserine modification. A compositionally biased stretch (low complexity) spans 477-489; the sequence is SPDLDSQSLSLSS. In terms of domain architecture, HP spans 544 to 612; sequence TREYKIYPYD…NDLKKKALLF (69 aa).

Interacts with F-actin and ABRA. As to expression, expressed in brain. Highly expressed in caudate/putamen, moderately expressed in the olfactory bulb. In the hippocampus, expressed in the CA1, CA2 and CA3 fields. In the cerebellum, expressed in Purkinje cells.

The protein resides in the cytoplasm. May act as scaffold protein. May stimulate ABRA activity and ABRA-dependent SRF transcriptional activity. This is Actin-binding LIM protein 2 (Ablim2) from Mus musculus (Mouse).